Consider the following 457-residue polypeptide: UDP-N-acetylmuramoylalanine--D-glutamate ligase (457 aa).

An ATP-binding site is contributed by 116–122 (GTNGKTT).

It belongs to the MurCDEF family.

It is found in the cytoplasm. The catalysed reaction is UDP-N-acetyl-alpha-D-muramoyl-L-alanine + D-glutamate + ATP = UDP-N-acetyl-alpha-D-muramoyl-L-alanyl-D-glutamate + ADP + phosphate + H(+). Its pathway is cell wall biogenesis; peptidoglycan biosynthesis. Cell wall formation. Catalyzes the addition of glutamate to the nucleotide precursor UDP-N-acetylmuramoyl-L-alanine (UMA). This is UDP-N-acetylmuramoylalanine--D-glutamate ligase from Caldicellulosiruptor bescii (strain ATCC BAA-1888 / DSM 6725 / KCTC 15123 / Z-1320) (Anaerocellum thermophilum).